Consider the following 459-residue polypeptide: Glutamyl-tRNA reductase (459 aa).

Substrate contacts are provided by residues 49 to 52 (TCNR), S109, 114 to 116 (EQQ), and Q120. C50 (nucleophile) is an active-site residue. Residue 189–194 (GAGAMG) coordinates NADP(+).

This sequence belongs to the glutamyl-tRNA reductase family. As to quaternary structure, homodimer.

The catalysed reaction is (S)-4-amino-5-oxopentanoate + tRNA(Glu) + NADP(+) = L-glutamyl-tRNA(Glu) + NADPH + H(+). Its pathway is porphyrin-containing compound metabolism; protoporphyrin-IX biosynthesis; 5-aminolevulinate from L-glutamyl-tRNA(Glu): step 1/2. Catalyzes the NADPH-dependent reduction of glutamyl-tRNA(Glu) to glutamate 1-semialdehyde (GSA). This Mycolicibacterium paratuberculosis (strain ATCC BAA-968 / K-10) (Mycobacterium paratuberculosis) protein is Glutamyl-tRNA reductase.